Here is a 325-residue protein sequence, read N- to C-terminus: Elongation factor Ts, mitochondrial (325 aa).

The transit peptide at methionine 1–serine 45 directs the protein to the mitochondrion. 3 positions are modified to N6-succinyllysine: lysine 76, lysine 133, and lysine 192. Serine 270 is modified (phosphoserine). At threonine 324 the chain carries Phosphothreonine.

Belongs to the EF-Ts family. As to expression, expressed in all tissues, with the highest levels of expression in skeletal muscle, liver and kidney.

The protein localises to the mitochondrion. In terms of biological role, associates with the EF-Tu.GDP complex and induces the exchange of GDP to GTP. It remains bound to the aminoacyl-tRNA.EF-Tu.GTP complex up to the GTP hydrolysis stage on the ribosome. The chain is Elongation factor Ts, mitochondrial from Homo sapiens (Human).